A 146-amino-acid chain; its full sequence is MSKSLIVYGSTTGNTETAAEYVAEAFENKEIDVELKNVTDVSVADLGNGYDIVLFGCSTWGEEEIELQDDFIPLYDSLENADLKGKKVSVFGCGDSDYTYFCGAVDAIEEKLEKMGAVVIGDSLKIDGDPERDEIVSWGSGIADKI.

The region spanning 4–143 (SLIVYGSTTG…EIVSWGSGIA (140 aa)) is the Flavodoxin-like domain.

It belongs to the flavodoxin family. FMN serves as cofactor.

Low-potential electron donor to a number of redox enzymes. The sequence is that of Flavodoxin from Maridesulfovibrio salexigens (strain ATCC 14822 / DSM 2638 / NCIMB 8403 / VKM B-1763) (Desulfovibrio salexigens).